Here is a 634-residue protein sequence, read N- to C-terminus: Probable potassium transport system protein Kup 1 (634 aa).

12 helical membrane passes run 20–40 (FLTLSLGSIGVVYGDIGTSPL), 64–84 (VMSLMLWTLVIIVTLKYVLLI), 110–130 (FAAISLLGMAGAALFYGDAII), 148–168 (PVFDPYILPLSMAILIGLFVV), 176–196 (VAAWFGPIMLLWFTVMALGGI), 224–244 (AGLLALGAVFLTVTGAEALYA), 256–276 (FAWFAVVFPALALCYLGQGAM), 290–310 (FLFPEWALLPMVGLATAATII), 348–368 (IYIPRANWLLLIAVLYLVFAF), 377–397 (AYGIAVTGTMVITSVMAYFVM), 405–425 (VATSALIIAPFLTVDLIFLMA), and 430–450 (IFEGGWIPLVIGGGLMGVMIT).

This sequence belongs to the HAK/KUP transporter (TC 2.A.72) family.

The protein localises to the cell inner membrane. It catalyses the reaction K(+)(in) + H(+)(in) = K(+)(out) + H(+)(out). Functionally, transport of potassium into the cell. Likely operates as a K(+):H(+) symporter. The protein is Probable potassium transport system protein Kup 1 of Rhodopseudomonas palustris (strain BisB5).